Consider the following 64-residue polypeptide: Lectin-A (64 aa).

Chitin-binding type-1 domains lie at 1 to 20 (APEC…QVVT) and 22 to 45 (DFDD…NTDA).

Glycosylated.

Its function is as follows. N-acetyl-D-glucosamine binding lectin. Shows low hemagglutinating activity towards human erythrocytes. Has low mitogenic activity towards human peripheral blood lymphocytes. The chain is Lectin-A from Phytolacca americana (American pokeweed).